We begin with the raw amino-acid sequence, 54 residues long: Large ribosomal subunit protein bL33 (54 aa).

This sequence belongs to the bacterial ribosomal protein bL33 family.

This Symbiobacterium thermophilum (strain DSM 24528 / JCM 14929 / IAM 14863 / T) protein is Large ribosomal subunit protein bL33.